Here is a 434-residue protein sequence, read N- to C-terminus: 3-phosphoshikimate 1-carboxyvinyltransferase (434 aa).

Residues Lys22, Ser23, and Arg27 each coordinate 3-phosphoshikimate. Lys22 contributes to the phosphoenolpyruvate binding site. Gly93 and Arg121 together coordinate phosphoenolpyruvate. 3-phosphoshikimate-binding residues include Ser168, Ser169, Gln170, Ser199, Asp320, and Lys347. Residue Gln170 coordinates phosphoenolpyruvate. The Proton acceptor role is filled by Asp320. Phosphoenolpyruvate is bound by residues Arg351, Arg394, and Lys419.

Belongs to the EPSP synthase family. As to quaternary structure, monomer.

The protein localises to the cytoplasm. The catalysed reaction is 3-phosphoshikimate + phosphoenolpyruvate = 5-O-(1-carboxyvinyl)-3-phosphoshikimate + phosphate. Its pathway is metabolic intermediate biosynthesis; chorismate biosynthesis; chorismate from D-erythrose 4-phosphate and phosphoenolpyruvate: step 6/7. In terms of biological role, catalyzes the transfer of the enolpyruvyl moiety of phosphoenolpyruvate (PEP) to the 5-hydroxyl of shikimate-3-phosphate (S3P) to produce enolpyruvyl shikimate-3-phosphate and inorganic phosphate. The sequence is that of 3-phosphoshikimate 1-carboxyvinyltransferase from Burkholderia orbicola (strain AU 1054).